Reading from the N-terminus, the 195-residue chain is 2-cysteine peroxiredoxin, chloroplastic (195 aa).

The region spanning I3–Y161 is the Thioredoxin domain. C49 functions as the Cysteine sulfenic acid (-SOH) intermediate in the catalytic mechanism.

The protein belongs to the peroxiredoxin family. AhpC/Prx1 subfamily. In terms of assembly, homodimer; disulfide-linked, upon oxidation.

The protein resides in the plastid. It localises to the chloroplast. The catalysed reaction is a hydroperoxide + [thioredoxin]-dithiol = an alcohol + [thioredoxin]-disulfide + H2O. In terms of biological role, thiol-specific peroxidase that catalyzes the reduction of hydrogen peroxide and organic hydroperoxides to water and alcohols, respectively. Plays a role in cell protection against oxidative stress by detoxifying peroxides. The protein is 2-cysteine peroxiredoxin, chloroplastic of Chattonella marina var. antiqua (Red tide flagellate).